The following is a 443-amino-acid chain: Transcriptional regulatory protein ZraR (443 aa).

The Response regulatory domain maps to 7 to 121 (DILVVDDDIS…KLQLTLSEAL (115 aa)). The residue at position 56 (D56) is a 4-aspartylphosphate. The 230-residue stretch at 141–370 (MVGDSPAMRA…LENAVERAVV (230 aa)) folds into the Sigma-54 factor interaction domain. ATP-binding residues include G172, T173, R329, and R359. Positions 423–442 (KTEAARRLGITRKTLLAKLS) form a DNA-binding region, H-T-H motif.

Post-translationally, phosphorylated by ZraS.

Its subcellular location is the cytoplasm. Its activity is regulated as follows. Activity of the ZraS/ZraR two-component system is repressed by the zinc-bound form of ZraP, which probably interacts with the periplasmic region of ZraS. Functionally, part of the Zra signaling pathway, an envelope stress response (ESR) system composed of the periplasmic accessory protein ZraP, the histidine kinase ZraS and the transcriptional regulator ZraR. The ZraPSR system contributes to antibiotic resistance and is important for membrane integrity in the presence of membrane-targeting biocides. ZraR is a member of the two-component regulatory system ZraS/ZraR. When activated by ZraS, acts in conjunction with sigma-54 to regulate the expression of zraP in the presence of high Zn(2+) or Pb(2+) concentrations. Also positively autoregulates the expression of the zraSR operon. The sequence is that of Transcriptional regulatory protein ZraR (zraR) from Klebsiella oxytoca.